We begin with the raw amino-acid sequence, 106 residues long: A-type ATP synthase subunit F (106 aa).

It belongs to the V-ATPase F subunit family. As to quaternary structure, has multiple subunits with at least A(3), B(3), C, D, E, F, H, I and proteolipid K(x).

The protein resides in the cell membrane. Component of the A-type ATP synthase that produces ATP from ADP in the presence of a proton gradient across the membrane. The sequence is that of A-type ATP synthase subunit F from Methanothermobacter thermautotrophicus (strain ATCC 29096 / DSM 1053 / JCM 10044 / NBRC 100330 / Delta H) (Methanobacterium thermoautotrophicum).